The sequence spans 260 residues: 5'-nucleotidase SurE (260 aa).

A divalent metal cation is bound by residues Asp8, Asp9, Ser43, and Asn96.

This sequence belongs to the SurE nucleotidase family. A divalent metal cation serves as cofactor.

It is found in the cytoplasm. It catalyses the reaction a ribonucleoside 5'-phosphate + H2O = a ribonucleoside + phosphate. Nucleotidase that shows phosphatase activity on nucleoside 5'-monophosphates. This chain is 5'-nucleotidase SurE, found in Ruegeria pomeroyi (strain ATCC 700808 / DSM 15171 / DSS-3) (Silicibacter pomeroyi).